Here is a 410-residue protein sequence, read N- to C-terminus: Mating-type locus allele B7 protein (410 aa).

Positions 1–110 (MSSDPNFSLT…VNVGSPAVGC (110 aa)) are variable domain between B alleles. The segment at residues 107-184 (AVGCRNLSED…NARRRSGWSH (78 aa)) is a DNA-binding region (homeobox; TALE-type). The interval 111–410 (RNLSEDLPAY…PFLCLSVAFV (300 aa)) is highly conserved between B alleles. 3 disordered regions span residues 202-225 (RAKLSSSTQSSPPSPMPEYPSNNL), 278-336 (TPKP…PELS), and 374-394 (ARGNRKVKALPKRAGKQQPDE). A Nuclear localization signal motif is present at residues 276–308 (KKTPKPGMPRPVTTVAKRQPARKTKPAAKPNSR). The span at 306 to 336 (NSRTANPRASTTPSIDSTLDSSKLESTPELS) shows a compositional bias: polar residues. Positions 333–410 (PELSMCSTAD…PFLCLSVAFV (78 aa)) are not essential for B7 function. Positions 375 to 388 (RGNRKVKALPKRAG) are enriched in basic residues.

The protein belongs to the TALE/M-ATYP homeobox family.

It localises to the nucleus. Its function is as follows. The B locus has at least 25 alleles, and any combination of two different B alleles yields a multimeric regulatory protein, that activates genes responsible for the pathogenicity and for the sexual development of the fungus within the corn plant. This is Mating-type locus allele B7 protein from Mycosarcoma maydis (Corn smut fungus).